A 226-amino-acid polypeptide reads, in one-letter code: Adenylate kinase (226 aa).

Gly11–Thr16 is an ATP binding site. Positions Ser31–Val64 are NMP. AMP-binding positions include Asn62–Val64, Gly90–Arg93, and Gln97. The tract at residues Gly127 to Asp164 is LID. ATP contacts are provided by residues Arg128 and Thr137–Tyr138. 2 residues coordinate AMP: Arg161 and Arg172. Gln205 is an ATP binding site.

It belongs to the adenylate kinase family. In terms of assembly, monomer.

The protein resides in the cytoplasm. It carries out the reaction AMP + ATP = 2 ADP. The protein operates within purine metabolism; AMP biosynthesis via salvage pathway; AMP from ADP: step 1/1. Catalyzes the reversible transfer of the terminal phosphate group between ATP and AMP. Plays an important role in cellular energy homeostasis and in adenine nucleotide metabolism. The sequence is that of Adenylate kinase from Blochmanniella floridana.